The chain runs to 234 residues: Probable transcriptional regulatory protein Psyr_3028 (234 aa).

This sequence belongs to the TACO1 family.

The protein resides in the cytoplasm. The protein is Probable transcriptional regulatory protein Psyr_3028 of Pseudomonas syringae pv. syringae (strain B728a).